The sequence spans 462 residues: G-patch domain and KOW motifs-containing protein homolog 1 (462 aa).

Disordered regions lie at residues 1–26 (MVEQ…KREE) and 182–218 (LKLP…EEEK). One can recognise a G-patch domain in the interval 154-202 (IESFGLAILRGCNWKDGDGIGKNPQKVALKLPNRRPPGLGLGATPKNPV). The region spanning 221–248 (EIKVGSFIKVVDGRNKGVYGKVEGRDDD) is the KOW 1 domain. The segment covering 289-305 (EYDKEKDRLETERKKLE) has biased composition (basic and acidic residues). Residues 289–337 (EYDKEKDRLETERKKLESQPPSTSTSQSSKDYKSKSSSSKHDKNSSEYE) are disordered. Positions 306–317 (SQPPSTSTSQSS) are enriched in low complexity. The span at 318-337 (KDYKSKSSSSKHDKNSSEYE) shows a compositional bias: basic and acidic residues. Residues 401–428 (PREIGEKLMIVAGKRSGQLAVMLDKDKR) enclose the KOW 2 domain.

It belongs to the MOS2 family.

The protein localises to the nucleus. This chain is G-patch domain and KOW motifs-containing protein homolog 1, found in Caenorhabditis elegans.